Reading from the N-terminus, the 536-residue chain is Thiamine transport system permease protein ThiP (536 aa).

12 helical membrane-spanning segments follow: residues 16–36 (GLCA…ALWL), 58–78 (FSFW…VFLA), 95–115 (LCAM…LSVY), 134–154 (FSPY…LPMA), 199–219 (VAAL…SLGG), 240–260 (PARA…LVLL), 291–311 (DALL…AVVV), 334–354 (SLRI…MLLW), 373–393 (LSGM…FFLL), 404–424 (ADGI…LKVL), 463–483 (AQAL…VALF), and 506–526 (DGAV…TLIE). The region spanning 56–261 (VRFSFWQAFL…VCCLALVLLS (206 aa)) is the ABC transmembrane type-1 1 domain. In terms of domain architecture, ABC transmembrane type-1 2 spans 331–525 (VWTSLRIALA…LLCFTLFTLI (195 aa)).

It belongs to the binding-protein-dependent transport system permease family. The complex is composed of two ATP-binding proteins (ThiQ), two transmembrane proteins (ThiP) and a solute-binding protein (ThiB).

It localises to the cell inner membrane. In terms of biological role, part of the ABC transporter complex ThiBPQ involved in thiamine import. Probably responsible for the translocation of the substrate across the membrane. Is also involved in thiamine pyrophosphate transport. The protein is Thiamine transport system permease protein ThiP of Salmonella typhimurium (strain LT2 / SGSC1412 / ATCC 700720).